The sequence spans 455 residues: Chromosomal replication initiator protein DnaA (455 aa).

The segment at 1–82 (MNRNTSSLWA…NPDFVVKLVE (82 aa)) is domain I, interacts with DnaA modulators. A domain II region spans residues 82-117 (EGVKPAPKQNNIVTTKQNAETAVDSEQHLQSVEFKT). Positions 118–335 (GLNSNHLFEN…GALNRVIANA (218 aa)) are domain III, AAA+ region. G163, G165, K166, and T167 together coordinate ATP. The tract at residues 336–455 (EFTGKTITID…WSNLIRTLSA (120 aa)) is domain IV, binds dsDNA.

It belongs to the DnaA family. Oligomerizes as a right-handed, spiral filament on DNA at oriC.

It is found in the cytoplasm. Functionally, plays an essential role in the initiation and regulation of chromosomal replication. ATP-DnaA binds to the origin of replication (oriC) to initiate formation of the DNA replication initiation complex once per cell cycle. Binds the DnaA box (a 9 base pair repeat at the origin) and separates the double-stranded (ds)DNA. Forms a right-handed helical filament on oriC DNA; dsDNA binds to the exterior of the filament while single-stranded (ss)DNA is stabiized in the filament's interior. The ATP-DnaA-oriC complex binds and stabilizes one strand of the AT-rich DNA unwinding element (DUE), permitting loading of DNA polymerase. After initiation quickly degrades to an ADP-DnaA complex that is not apt for DNA replication. Binds acidic phospholipids. The protein is Chromosomal replication initiator protein DnaA of Actinobacillus succinogenes (strain ATCC 55618 / DSM 22257 / CCUG 43843 / 130Z).